Reading from the N-terminus, the 61-residue chain is Protein translocase subunit SecE (61 aa).

The chain crosses the membrane as a helical span at residues 38-58 (GIGMILIGLIGLVIRMIGYLI).

Belongs to the SecE/SEC61-gamma family. In terms of assembly, component of the Sec protein translocase complex. Heterotrimer consisting of SecY (alpha), SecG (beta) and SecE (gamma) subunits. The heterotrimers can form oligomers, although 1 heterotrimer is thought to be able to translocate proteins. Interacts with the ribosome. May interact with SecDF, and other proteins may be involved.

The protein resides in the cell membrane. Its function is as follows. Essential subunit of the Sec protein translocation channel SecYEG. Clamps together the 2 halves of SecY. May contact the channel plug during translocation. The polypeptide is Protein translocase subunit SecE (Thermococcus onnurineus (strain NA1)).